The primary structure comprises 115 residues: Large ribosomal subunit protein bL19 (115 aa).

Belongs to the bacterial ribosomal protein bL19 family.

In terms of biological role, this protein is located at the 30S-50S ribosomal subunit interface and may play a role in the structure and function of the aminoacyl-tRNA binding site. This chain is Large ribosomal subunit protein bL19, found in Erwinia tasmaniensis (strain DSM 17950 / CFBP 7177 / CIP 109463 / NCPPB 4357 / Et1/99).